We begin with the raw amino-acid sequence, 233 residues long: MSVVRENGVIVAIDGPSGAGKSSLTKLLAKRLGYIHIDTGAMFRAVALSAQRAGIASDDDAGLAELCRGLDITFARDGEACRVLANGEDVSREIRTEEIGLLTSTVSARQPVRQALLEMQRKMGAKGGVILEGRDIGTVVFPDAEVKFFLSASAEERGRRRYLELAARGESATLEETIAKVVQRDRQDEGREHAPLKQAEDAVPIDSTSLTIEEVLELMERTVKERLAQGDKG.

15 to 23 (GPSGAGKSS) provides a ligand contact to ATP. The segment covering 183 to 200 (QRDRQDEGREHAPLKQAE) has biased composition (basic and acidic residues). Residues 183-203 (QRDRQDEGREHAPLKQAEDAV) are disordered.

This sequence belongs to the cytidylate kinase family. Type 1 subfamily.

The protein localises to the cytoplasm. The catalysed reaction is CMP + ATP = CDP + ADP. The enzyme catalyses dCMP + ATP = dCDP + ADP. In Geobacter sp. (strain M21), this protein is Cytidylate kinase.